Here is a 104-residue protein sequence, read N- to C-terminus: Large ribosomal subunit protein uL23 (104 aa).

This sequence belongs to the universal ribosomal protein uL23 family. As to quaternary structure, part of the 50S ribosomal subunit. Contacts protein L29, and trigger factor when it is bound to the ribosome.

One of the early assembly proteins it binds 23S rRNA. One of the proteins that surrounds the polypeptide exit tunnel on the outside of the ribosome. Forms the main docking site for trigger factor binding to the ribosome. The chain is Large ribosomal subunit protein uL23 from Neisseria meningitidis serogroup B (strain ATCC BAA-335 / MC58).